The primary structure comprises 346 residues: Outer membrane protein A (346 aa).

Residues 1 to 21 form the signal peptide; sequence MKKTAIAIAVALAGFATVAQA. 8 beta stranded membrane passes run 27-37, 55-66, 70-78, 96-107, 112-120, 142-151, 156-163, and 182-190; these read TWYTGAKLGWS, QLGAGAFGGYQV, VGFEMGYDW, QGVQLTAKLGYP, LDIYTRLGG, PVFAGGVEYA, IATRLEYQ, and MLSLGVSYR. The interval 197–208 is hinge-like; the sequence is APVVAPAPAPAP. Tandem repeats lie at residues 201–202, 203–204, 205–206, and 207–208. The 4 X 2 AA tandem repeats of A-P stretch occupies residues 201 to 208; sequence APAPAPAP. In terms of domain architecture, OmpA-like spans 210 to 338; the sequence is VQTKHFTLKS…RVEIEVKGIK (129 aa). Residues C311 and C323 are joined by a disulfide bond.

The protein belongs to the outer membrane OOP (TC 1.B.6) superfamily. OmpA family. As to quaternary structure, monomer and homodimer.

The protein localises to the cell outer membrane. In terms of biological role, with TolR probably plays a role in maintaining the position of the peptidoglycan cell wall in the periplasm. Acts as a porin with low permeability that allows slow penetration of small solutes; an internal gate slows down solute passage. Its function is as follows. Required for conjugation with F-type plasmids; probably serves as the mating receptor on recipient cells. The protein is Outer membrane protein A of Escherichia coli O157:H7.